Consider the following 163-residue polypeptide: Xanthine-guanine phosphoribosyltransferase (163 aa).

Residues 43–44 (RG) and 95–103 (DDLADTGGT) contribute to the 5-phospho-alpha-D-ribose 1-diphosphate site. Residue Asp96 coordinates Mg(2+). Residues Asp99 and Ile142 each coordinate guanine. Positions 99 and 142 each coordinate xanthine. Residues 99 to 103 (DTGGT) and 141 to 142 (WI) each bind GMP.

This sequence belongs to the purine/pyrimidine phosphoribosyltransferase family. XGPT subfamily. As to quaternary structure, homotetramer. Requires Mg(2+) as cofactor.

It is found in the cell inner membrane. It catalyses the reaction GMP + diphosphate = guanine + 5-phospho-alpha-D-ribose 1-diphosphate. It carries out the reaction XMP + diphosphate = xanthine + 5-phospho-alpha-D-ribose 1-diphosphate. The enzyme catalyses IMP + diphosphate = hypoxanthine + 5-phospho-alpha-D-ribose 1-diphosphate. It participates in purine metabolism; GMP biosynthesis via salvage pathway; GMP from guanine: step 1/1. It functions in the pathway purine metabolism; XMP biosynthesis via salvage pathway; XMP from xanthine: step 1/1. Its function is as follows. Purine salvage pathway enzyme that catalyzes the transfer of the ribosyl-5-phosphate group from 5-phospho-alpha-D-ribose 1-diphosphate (PRPP) to the N9 position of the 6-oxopurines guanine and xanthine to form the corresponding ribonucleotides GMP (guanosine 5'-monophosphate) and XMP (xanthosine 5'-monophosphate), with the release of PPi. To a lesser extent, also acts on hypoxanthine. In Nitratidesulfovibrio vulgaris (strain ATCC 29579 / DSM 644 / CCUG 34227 / NCIMB 8303 / VKM B-1760 / Hildenborough) (Desulfovibrio vulgaris), this protein is Xanthine-guanine phosphoribosyltransferase.